We begin with the raw amino-acid sequence, 318 residues long: MIETNVSRRHHESFLQVIQSYYQLTKPRIIPLLLITTAGSMWIAAQGQVDPVLLLVTMAGGTLAAASAQTINCIYDRDIDYDMERTRHRPMPSGKVQVRDALIFAIALAVLSFTLLTVFANLLAASLALSGIIFYVLIYTHWLKRHSTQNIVIGGAAGAIPALVGWAAVTGTLSWSAWLIFAIVFLWTPPHFWALALMIRDDYAKVGIPMLPVVEGNAATVKQIWYYTLITVVATLLLVYPLHSSGIVYAAIAISLGAVFIRKSWRLLHNPEDRPTARELFLYSISYMMLLCLGMVIDSLPLTHHLINAVINQLHLIS.

Helical transmembrane passes span 29-49, 51-71, 102-122, 123-143, 151-171, 179-199, 219-239, 241-261, and 280-300; these read IIPL…QGQV, PVLL…AQTI, LIFA…FANL, LAAS…THWL, IVIG…AVTG, LIFA…ALMI, ATVK…LLLV, PLHS…AVFI, and LFLY…IDSL.

The protein belongs to the UbiA prenyltransferase family. Protoheme IX farnesyltransferase subfamily.

Its subcellular location is the cell inner membrane. The catalysed reaction is heme b + (2E,6E)-farnesyl diphosphate + H2O = Fe(II)-heme o + diphosphate. The protein operates within porphyrin-containing compound metabolism; heme O biosynthesis; heme O from protoheme: step 1/1. Functionally, converts heme B (protoheme IX) to heme O by substitution of the vinyl group on carbon 2 of heme B porphyrin ring with a hydroxyethyl farnesyl side group. The sequence is that of Protoheme IX farnesyltransferase from Trichormus variabilis (strain ATCC 29413 / PCC 7937) (Anabaena variabilis).